Consider the following 1669-residue polypeptide: Collagen alpha-1(IV) chain (1669 aa).

The first 27 residues, 1–27 (MGPRLSVWLLLLFAALLLHEERSRAAA), serve as a signal peptide directing secretion. Positions 28-172 (KGDCGGSGCG…LGHVPGTLLK (145 aa)) are cleaved as a propeptide — N-terminal propeptide (7S domain). Positions 47–1443 (QKGERGLPGL…MGPPGTPSVD (1397 aa)) are disordered. Over residues 92 to 104 (TRGPPGAAGYPGN) the composition is skewed to low complexity. N-linked (GlcNAc...) asparagine glycosylation occurs at N126. Residues 173-1440 (GERGFPGIPG…PGSMGPPGTP (1268 aa)) form a triple-helical region region. The segment covering 196-214 (VGPPGFTGPPGPPGPPGPP) has biased composition (pro residues). 3 positions are modified to 3-hydroxyproline: P204, P207, and P210. Residues 234-247 (QGVSGPPGVPGQAQ) show a composition bias toward low complexity. Residues 289 to 298 (PGKDGEKGER) show a composition bias toward basic and acidic residues. Pro residues predominate over residues 367–376 (PGQPGPPGFP). Over residues 377–387 (TPGQAGAPGFP) the composition is skewed to low complexity. Composition is skewed to pro residues over residues 413-424 (PGPPGPPGPPGQ) and 436-448 (PGPP…PGTP). The segment covering 485–494 (PGEIGFPGQP) has biased composition (low complexity). 2 stretches are compositionally biased toward basic and acidic residues: residues 497–508 (KGDRGLPGRDGL) and 535–545 (FDMRLKGDKGD). The segment covering 586 to 595 (GPPGGVGFPG) has biased composition (gly residues). 2 positions are modified to 3-hydroxyproline: P587 and P602. The residue at position 603 (P603) is a 4-hydroxyproline. P605 carries the 3-hydroxyproline modification. 4-hydroxyproline is present on P606. Positions 611-620 (IGPVGEKGQA) are enriched in low complexity. The segment covering 621–630 (GFPGGPGSPG) has biased composition (gly residues). 4-hydroxyproline occurs at positions 623, 626, 629, and 632. P647 carries the 3-hydroxyproline modification. Residues 715-731 (RPGFNGLPGNPGPQGQK) are compositionally biased toward low complexity. Residues 758 to 767 (GSIGGPGVPG) are compositionally biased toward gly residues. The segment covering 784–802 (PGPPGVQGPAGPPGVPGIG) has biased composition (pro residues). Residues 803-817 (PPGAMGPPGGQGPPG) show a composition bias toward gly residues. 2 stretches are compositionally biased toward low complexity: residues 847–875 (SQGL…PGFP) and 994–1003 (DPGLSGTPGS). Positions 1011–1020 (GSVGGMGLPG) are enriched in gly residues. P1214 bears the 3-hydroxyproline mark. A compositionally biased stretch (low complexity) spans 1220–1230 (QPGLPGTPGHP). Pro residues predominate over residues 1247–1258 (PGHPGPMGPPGF). Over residues 1290–1299 (GMPGIGGSPG) the composition is skewed to gly residues. 3 stretches are compositionally biased toward low complexity: residues 1333–1343 (DQGVPGPKGLQ), 1368–1391 (PGLK…SVGL), and 1398–1412 (PGFD…ETGP). Pro residues predominate over residues 1413 to 1428 (FGPPGPRGFPGPPGPD). A 3-hydroxyproline modification is found at P1424. In terms of domain architecture, Collagen IV NC1 spans 1445-1669 (GFLVTRHSQT…SRCQVCMRRT (225 aa)). 6 disulfide bridges follow: C1460-C1551, C1493-C1548, C1505-C1511, C1570-C1665, C1604-C1662, and C1616-C1622. M1533 participates in a covalent cross-link: S-Lysyl-methionine sulfilimine (Met-Lys) (interchain with K-1651). K1651 is covalently cross-linked (S-Lysyl-methionine sulfilimine (Lys-Met) (interchain with M-1533)).

Belongs to the type IV collagen family. As to quaternary structure, there are six type IV collagen isoforms, alpha 1(IV)-alpha 6(IV), each of which can form a triple helix structure with 2 other chains to generate type IV collagen network. Interacts with EFEMP2. Post-translationally, lysines at the third position of the tripeptide repeating unit (G-X-Y) are hydroxylated. The modified lysines can be O-glycosylated. Contains 4-hydroxyproline. Prolines at the third position of the tripeptide repeating unit (G-X-Y) are hydroxylated in some or all of the chains. In terms of processing, contains 3-hydroxyproline. This modification occurs on the first proline residue in the sequence motif Gly-Pro-Hyp, where Hyp is 4-hydroxyproline. Post-translationally, type IV collagens contain numerous cysteine residues which are involved in inter- and intramolecular disulfide bonding. 12 of these, located in the NC1 domain, are conserved in all known type IV collagens. The trimeric structure of the NC1 domains is stabilized by covalent bonds (sulfilimine cross-links) between Lys and Met residues. These cross-links are important for the mechanical stability of the basement membrane. Sulfilimine cross-link is catalyzed by PXDN. In terms of processing, proteolytic processing produces the C-terminal NC1 peptide, arresten. In terms of tissue distribution, detected in the basement membrane of the cornea (at protein level).

The protein localises to the secreted. It localises to the extracellular space. Its subcellular location is the extracellular matrix. The protein resides in the basement membrane. Type IV collagen is the major structural component of glomerular basement membranes (GBM), forming a 'chicken-wire' meshwork together with laminins, proteoglycans and entactin/nidogen. In terms of biological role, arresten, comprising the C-terminal NC1 domain, inhibits angiogenesis and tumor formation. The C-terminal half is found to possess the anti-angiogenic activity. Specifically inhibits endothelial cell proliferation, migration and tube formation. The chain is Collagen alpha-1(IV) chain from Mus musculus (Mouse).